Here is a 371-residue protein sequence, read N- to C-terminus: Serpentine receptor class delta-1 (371 aa).

The next 7 helical transmembrane spans lie at 31 to 51, 62 to 82, 109 to 129, 148 to 168, 209 to 229, 267 to 287, and 295 to 315; these read LSEV…YVIF, AVLL…SLLA, CFFC…ILLI, MIVI…FYFW, IPSL…YFII, AIPI…FGII, and ITFR…FIFI. The segment at 344–371 is disordered; sequence EKFNQPPKQPTNPAQQSANNDAAKTEKV. Residues 354 to 365 are compositionally biased toward polar residues; that stretch reads TNPAQQSANNDA.

The protein belongs to the nematode receptor-like protein srd family.

It localises to the membrane. The polypeptide is Serpentine receptor class delta-1 (srd-1) (Caenorhabditis elegans).